The sequence spans 167 residues: MVKAIDIKKEQVAEITDKLQRSASAIVVDYRGLKVEEVTELRKQCREKGLEYKVYKNTLTRLAAENAGMKELVGELVGPNAIVFSYDDPVAAAKVASEFAKTHKNLELKAGLVEGVLYKDAQLEEFASIPSREVLIAKLLGSFKAPISNFAYLIKAIADKKEAEGQA.

The protein belongs to the universal ribosomal protein uL10 family. As to quaternary structure, part of the ribosomal stalk of the 50S ribosomal subunit. The N-terminus interacts with L11 and the large rRNA to form the base of the stalk. The C-terminus forms an elongated spine to which L12 dimers bind in a sequential fashion forming a multimeric L10(L12)X complex.

Forms part of the ribosomal stalk, playing a central role in the interaction of the ribosome with GTP-bound translation factors. This is Large ribosomal subunit protein uL10 from Alkaliphilus oremlandii (strain OhILAs) (Clostridium oremlandii (strain OhILAs)).